Consider the following 88-residue polypeptide: Apolipoprotein C-I (88 aa).

An N-terminal signal peptide occupies residues 1–26 (MRLILSLPVLAVVLAMVLEGPAPAQA).

This sequence belongs to the apolipoprotein C1 family.

The protein resides in the secreted. In terms of biological role, inhibitor of lipoprotein binding to the low density lipoprotein (LDL) receptor, LDL receptor-related protein, and very low density lipoprotein (VLDL) receptor. Associates with high density lipoproteins (HDL) and the triacylglycerol-rich lipoproteins in the plasma and makes up about 10% of the protein of the VLDL and 2% of that of HDL. Appears to interfere directly with fatty acid uptake and is also the major plasma inhibitor of cholesteryl ester transfer protein (CETP). Binds free fatty acids and reduces their intracellular esterification. Modulates the interaction of APOE with beta-migrating VLDL and inhibits binding of beta-VLDL to the LDL receptor-related protein. This is Apolipoprotein C-I (APOC1) from Cynopterus brachyotis (Lesser short-nosed fruit bat).